Consider the following 326-residue polypeptide: Alkanal monooxygenase beta chain (326 aa).

Belongs to the bacterial luciferase oxidoreductase family. In terms of assembly, heterodimer of an alpha and a beta chain.

It catalyses the reaction a long-chain fatty aldehyde + FMNH2 + O2 = a long-chain fatty acid + hnu + FMN + H2O + 2 H(+). In terms of biological role, light-emitting reaction in luminous bacteria. The specific role of the beta subunit is unknown, but it is absolutely required for bioluminescence activity. In Aliivibrio fischeri (Vibrio fischeri), this protein is Alkanal monooxygenase beta chain (luxB).